Reading from the N-terminus, the 244-residue chain is MNEKNIKHSQNFITSKHNIDKIMTNIRLNEHDNIFEIGSGKGHFTLELVQRCNFVTAIEIDHKLCKTTENKLVDHDNFQVLNKDILQFKFPKNQSYKIFGNIPYNISTDIIRKIVFDSIADEIYLIVEYGFAKRLLNTKRSLALFLMAEVDISILSMVPREYFHPKPRVNSSLIRLNRKKSRISHKDKQKYNYFVMKWVNKEYKKIFTKNQFNNSLKHAGIDDLNNISFEQFLSLFNSYKLFNK.

S-adenosyl-L-methionine contacts are provided by Asn11, Ile13, Gly38, Glu59, Asp84, and Asn101.

It belongs to the class I-like SAM-binding methyltransferase superfamily. rRNA adenine N(6)-methyltransferase family.

It catalyses the reaction adenosine(2085) in 23S rRNA + 2 S-adenosyl-L-methionine = N(6)-dimethyladenosine(2085) in 23S rRNA + 2 S-adenosyl-L-homocysteine + 2 H(+). Functionally, this protein produces a dimethylation of the adenine residue at position 2085 in 23S rRNA, resulting in reduced affinity between ribosomes and macrolide-lincosamide-streptogramin B antibiotics. The protein is rRNA adenine N-6-methyltransferase (ermC) of Staphylococcus aureus.